The primary structure comprises 237 residues: Ras-related protein Rab-23 (237 aa).

Position 19 (A19) interacts with GDP. Positions 20, 21, 22, 23, and 24 each coordinate GTP. GDP is bound by residues G21, K22, S23, S24, and D37. S23 provides a ligand contact to Mg(2+). The short motif at R28–F46 is the Switch 1 element. Position 38 (Y38) interacts with GTP. GDP is bound at residue K40. T41 lines the GTP pocket. Residues T41 and D64 each contribute to the Mg(2+) site. The Switch 2 signature appears at T65–A84. The GTP site is built by G67, N121, K122, D124, S151, V152, and K153. GDP contacts are provided by N121, K122, and D124. GDP-binding residues include V152 and K153. A phosphoserine mark is found at S186 and S187. The tract at residues Q204 to P237 is disordered. The residue at position 234 (C234) is a Cysteine methyl ester. The S-geranylgeranyl cysteine moiety is linked to residue C234. A propeptide spans S235–P237 (removed in mature form).

This sequence belongs to the small GTPase superfamily. Rab family. As to quaternary structure, interacts with SUFU. Requires Mg(2+) as cofactor. As to expression, detected in brain neurons (at protein level). Forebrain and midbrain.

Its subcellular location is the cell membrane. The protein localises to the cytoplasm. The protein resides in the endosome membrane. It is found in the cytoplasmic vesicle. It localises to the autophagosome. Its subcellular location is the phagosome. The protein localises to the phagosome membrane. It carries out the reaction GTP + H2O = GDP + phosphate + H(+). Regulated by guanine nucleotide exchange factors (GEFs) which promote the exchange of bound GDP for free GTP. Regulated by GTPase activating proteins (GAPs) which increase the GTP hydrolysis activity. Inhibited by GDP dissociation inhibitors (GDIs). The small GTPases Rab are key regulators of intracellular membrane trafficking, from the formation of transport vesicles to their fusion with membranes. Rabs cycle between an inactive GDP-bound form and an active GTP-bound form that is able to recruit to membranes different set of downstream effectors directly responsible for vesicle formation, movement, tethering and fusion. Plays a role in autophagic vacuole assembly, and mediates defense against pathogens, such as S.aureus, by promoting their capture by autophagosomes that then merge with lysosomes. Together with SUFU, prevents nuclear import of GLI1, and thereby inhibits GLI1 transcription factor activity. Regulates GLI1 in differentiating chondrocytes. Likewise, regulates GLI3 proteolytic processing and modulates GLI2 and GLI3 transcription factor activity. This is Ras-related protein Rab-23 from Mus musculus (Mouse).